Here is a 282-residue protein sequence, read N- to C-terminus: Ribosomal RNA small subunit methyltransferase A (282 aa).

S-adenosyl-L-methionine contacts are provided by His11, Leu13, Gly44, Glu65, Asp90, and Asn106.

The protein belongs to the class I-like SAM-binding methyltransferase superfamily. rRNA adenine N(6)-methyltransferase family. RsmA subfamily.

The protein resides in the cytoplasm. It catalyses the reaction adenosine(1518)/adenosine(1519) in 16S rRNA + 4 S-adenosyl-L-methionine = N(6)-dimethyladenosine(1518)/N(6)-dimethyladenosine(1519) in 16S rRNA + 4 S-adenosyl-L-homocysteine + 4 H(+). Its function is as follows. Specifically dimethylates two adjacent adenosines (A1518 and A1519) in the loop of a conserved hairpin near the 3'-end of 16S rRNA in the 30S particle. May play a critical role in biogenesis of 30S subunits. This Synechococcus sp. (strain JA-2-3B'a(2-13)) (Cyanobacteria bacterium Yellowstone B-Prime) protein is Ribosomal RNA small subunit methyltransferase A.